Consider the following 636-residue polypeptide: Chaperone protein DnaK (636 aa).

Threonine 196 is modified (phosphothreonine; by autocatalysis). Residues 591-636 form a disordered region; the sequence is LAEAMYKSSSQPGAQEAPPTDGQPKPDEKGKDNVVDAEFVDVDDKK. Over residues 614-624 the composition is skewed to basic and acidic residues; sequence PKPDEKGKDNV.

The protein belongs to the heat shock protein 70 family.

Acts as a chaperone. The chain is Chaperone protein DnaK from Solibacter usitatus (strain Ellin6076).